A 104-amino-acid chain; its full sequence is Small ribosomal subunit protein uS10 (104 aa).

It belongs to the universal ribosomal protein uS10 family. Part of the 30S ribosomal subunit.

Its function is as follows. Involved in the binding of tRNA to the ribosomes. This is Small ribosomal subunit protein uS10 from Hydrogenobaculum sp. (strain Y04AAS1).